A 129-amino-acid polypeptide reads, in one-letter code: Small ribosomal subunit protein bS6 (129 aa).

It belongs to the bacterial ribosomal protein bS6 family.

Its function is as follows. Binds together with bS18 to 16S ribosomal RNA. In Pelobacter propionicus (strain DSM 2379 / NBRC 103807 / OttBd1), this protein is Small ribosomal subunit protein bS6.